Reading from the N-terminus, the 790-residue chain is Lon protease (790 aa).

The 198-residue stretch at 23–220 (LPIMPIFHTV…EITLIVNHQL (198 aa)) folds into the Lon N-terminal domain. Residue 372-379 (GPPGTGKT) participates in ATP binding. The 182-residue stretch at 608–789 (ISKPGIAMGL…REVLNIALSR (182 aa)) folds into the Lon proteolytic domain. Residues Ser-695 and Lys-738 contribute to the active site.

It belongs to the peptidase S16 family. Homohexamer. Organized in a ring with a central cavity.

The protein resides in the cytoplasm. The catalysed reaction is Hydrolysis of proteins in presence of ATP.. Functionally, ATP-dependent serine protease that mediates the selective degradation of mutant and abnormal proteins as well as certain short-lived regulatory proteins. Required for cellular homeostasis and for survival from DNA damage and developmental changes induced by stress. Degrades polypeptides processively to yield small peptide fragments that are 5 to 10 amino acids long. Binds to DNA in a double-stranded, site-specific manner. This Syntrophus aciditrophicus (strain SB) protein is Lon protease.